The chain runs to 218 residues: Cell division protein SepF (218 aa).

The segment at 24–115 (EDVTASTDNV…IANRREQYQQ (92 aa)) is disordered. Over residues 28 to 43 (ASTDNVIPRSQQSVRA) the composition is skewed to polar residues. The span at 47–63 (PKQEPRNNHVQQDHQAR) shows a compositional bias: basic and acidic residues.

It belongs to the SepF family. Homodimer. Interacts with FtsZ.

The protein localises to the cytoplasm. Functionally, cell division protein that is part of the divisome complex and is recruited early to the Z-ring. Probably stimulates Z-ring formation, perhaps through the cross-linking of FtsZ protofilaments. Its function overlaps with FtsA. The chain is Cell division protein SepF from Streptococcus pyogenes serotype M4 (strain MGAS10750).